A 262-amino-acid polypeptide reads, in one-letter code: 3-methyl-2-oxobutanoate hydroxymethyltransferase (262 aa).

The Mg(2+) site is built by Asp31 and Asp70. 3-methyl-2-oxobutanoate is bound by residues Asp31–Ser32, Asp70, and Lys99. Glu101 provides a ligand contact to Mg(2+). The active-site Proton acceptor is the Glu168.

This sequence belongs to the PanB family. In terms of assembly, homodecamer; pentamer of dimers. Requires Mg(2+) as cofactor.

It is found in the cytoplasm. The catalysed reaction is 3-methyl-2-oxobutanoate + (6R)-5,10-methylene-5,6,7,8-tetrahydrofolate + H2O = 2-dehydropantoate + (6S)-5,6,7,8-tetrahydrofolate. Its pathway is cofactor biosynthesis; coenzyme A biosynthesis. Functionally, catalyzes the reversible reaction in which hydroxymethyl group from 5,10-methylenetetrahydrofolate is transferred onto alpha-ketoisovalerate to form ketopantoate. The chain is 3-methyl-2-oxobutanoate hydroxymethyltransferase from Cenarchaeum symbiosum (strain A).